Reading from the N-terminus, the 149-residue chain is Deoxyuridine 5'-triphosphate nucleotidohydrolase (149 aa).

Residues 68 to 70 (RSG), Asn81, 85 to 87 (TID), and Lys95 each bind substrate.

It belongs to the dUTPase family. Mg(2+) is required as a cofactor.

The catalysed reaction is dUTP + H2O = dUMP + diphosphate + H(+). It functions in the pathway pyrimidine metabolism; dUMP biosynthesis; dUMP from dCTP (dUTP route): step 2/2. Functionally, this enzyme is involved in nucleotide metabolism: it produces dUMP, the immediate precursor of thymidine nucleotides and it decreases the intracellular concentration of dUTP so that uracil cannot be incorporated into DNA. This chain is Deoxyuridine 5'-triphosphate nucleotidohydrolase, found in Bdellovibrio bacteriovorus (strain ATCC 15356 / DSM 50701 / NCIMB 9529 / HD100).